Consider the following 182-residue polypeptide: Ribosome maturation factor RimM (182 aa).

The region spanning Glu-102–Phe-182 is the PRC barrel domain.

Belongs to the RimM family. In terms of assembly, binds ribosomal protein uS19.

The protein localises to the cytoplasm. An accessory protein needed during the final step in the assembly of 30S ribosomal subunit, possibly for assembly of the head region. Essential for efficient processing of 16S rRNA. May be needed both before and after RbfA during the maturation of 16S rRNA. It has affinity for free ribosomal 30S subunits but not for 70S ribosomes. The chain is Ribosome maturation factor RimM from Yersinia pseudotuberculosis serotype IB (strain PB1/+).